A 272-amino-acid polypeptide reads, in one-letter code: Ribonuclease 3 (272 aa).

Residues Met1 to Gln20 are compositionally biased toward polar residues. Residues Met1–Ala38 are disordered. One can recognise an RNase III domain in the interval Ala44–Gly171. Glu84 provides a ligand contact to Mg(2+). Asp88 is an active-site residue. 2 residues coordinate Mg(2+): Asp157 and Glu160. Glu160 is an active-site residue. Residues Asp196–Val265 enclose the DRBM domain.

The protein belongs to the ribonuclease III family. In terms of assembly, homodimer. Requires Mg(2+) as cofactor.

Its subcellular location is the cytoplasm. It catalyses the reaction Endonucleolytic cleavage to 5'-phosphomonoester.. Its function is as follows. Digests double-stranded RNA. Involved in the processing of primary rRNA transcript to yield the immediate precursors to the large and small rRNAs (23S and 16S). Processes some mRNAs, and tRNAs when they are encoded in the rRNA operon. Processes pre-crRNA and tracrRNA of type II CRISPR loci if present in the organism. The protein is Ribonuclease 3 of Rhodopseudomonas palustris (strain ATCC BAA-98 / CGA009).